A 462-amino-acid chain; its full sequence is tRNA-2-methylthio-N(6)-dimethylallyladenosine synthase (462 aa).

The 116-residue stretch at 1–116 (MKLFIQTLGC…ITQVLERPKA (116 aa)) folds into the MTTase N-terminal domain. Residues Cys10, Cys47, Cys79, Cys148, Cys152, and Cys155 each coordinate [4Fe-4S] cluster. One can recognise a Radical SAM core domain in the interval 134-370 (QGMGIKAHLN…NLHKEILSKK (237 aa)). Residues 372-436 (QLEIGRIHNV…GGGLMGRFIN (65 aa)) enclose the TRAM domain.

This sequence belongs to the methylthiotransferase family. MiaB subfamily. As to quaternary structure, monomer. [4Fe-4S] cluster serves as cofactor.

The protein localises to the cytoplasm. It carries out the reaction N(6)-dimethylallyladenosine(37) in tRNA + (sulfur carrier)-SH + AH2 + 2 S-adenosyl-L-methionine = 2-methylsulfanyl-N(6)-dimethylallyladenosine(37) in tRNA + (sulfur carrier)-H + 5'-deoxyadenosine + L-methionine + A + S-adenosyl-L-homocysteine + 2 H(+). Functionally, catalyzes the methylthiolation of N6-(dimethylallyl)adenosine (i(6)A), leading to the formation of 2-methylthio-N6-(dimethylallyl)adenosine (ms(2)i(6)A) at position 37 in tRNAs that read codons beginning with uridine. This Helicobacter hepaticus (strain ATCC 51449 / 3B1) protein is tRNA-2-methylthio-N(6)-dimethylallyladenosine synthase.